The following is a 347-amino-acid chain: uncharacterized protein (347 aa).

This is an uncharacterized protein from Sinorhizobium fredii (strain NBRC 101917 / NGR234).